Consider the following 119-residue polypeptide: Ribonuclease P protein component (119 aa).

Belongs to the RnpA family. Consists of a catalytic RNA component (M1 or rnpB) and a protein subunit.

The enzyme catalyses Endonucleolytic cleavage of RNA, removing 5'-extranucleotides from tRNA precursor.. Its function is as follows. RNaseP catalyzes the removal of the 5'-leader sequence from pre-tRNA to produce the mature 5'-terminus. It can also cleave other RNA substrates such as 4.5S RNA. The protein component plays an auxiliary but essential role in vivo by binding to the 5'-leader sequence and broadening the substrate specificity of the ribozyme. The sequence is that of Ribonuclease P protein component from Photorhabdus laumondii subsp. laumondii (strain DSM 15139 / CIP 105565 / TT01) (Photorhabdus luminescens subsp. laumondii).